We begin with the raw amino-acid sequence, 521 residues long: MLPSAMYPELLADLVTDLPHAVRLQRLVSMLRTHFRCGAVALLRLEEDHLRPVAVDGLVRDALGRRFAVGLHPRLAAILARRGVTCFHHDSMLPDPYDGLIDEHVGEPLPVHDCMGTSLAVDGQPWGALTLDALAIGTFDAAAQAELQRLTVIVEAAIRTTRLEGEIRALQLARGTPEADEGTAQHGDIGGEIIGQSEAIANLLHELEVVADTDLPVLLLGETGVGKELFAHRLHRQSRRRAQPLVHVNCAALPESLAESELFGHARGAFSGATGERPGRFEAADGGTLFLDEVGELPLAIQAKLLRTLQNGEIQRLGSDRPRRVNVRVIAATNRNLREHVRDGSFRADLYHRLSVYPIPIPPLRERGNDVLLLAGRFLELNRARLGLRSLRLSGGAQDALRSYRWPGNVRELEHVISRAALRAVSRGAGRNDIVTLEPELLDLDGLEVPAAHHAGAGMASAFAAPALAAGITLRDAVEQTQRACIEQALKDQGGNWAQAARQLGIDASNLHKLARRLGCK.

Position 56 is a 4-aspartylphosphate (Asp-56). Residues 193-422 (IIGQSEAIAN…LEHVISRAAL (230 aa)) form the Sigma-54 factor interaction domain. Residues 221–228 (GETGVGKE) and 293–302 (EVGELPLAIQ) contribute to the ATP site. A DNA-binding region (H-T-H motif) is located at residues 497-516 (WAQAARQLGIDASNLHKLAR).

It functions in the pathway nitrogen metabolism; nitrate reduction (denitrification) [regulation]. In terms of biological role, required for the nitric oxide (NO) induced expression of NO reductase. Not required for expression of 2 other pathway members, nitrate reductase (nirS) and nitrous oxide reductase (nosZ). The protein is Nitric oxide reductase transcription regulator NorR2 (norR2) of Cupriavidus necator (strain ATCC 17699 / DSM 428 / KCTC 22496 / NCIMB 10442 / H16 / Stanier 337) (Ralstonia eutropha).